Reading from the N-terminus, the 320-residue chain is RNA polymerase sigma factor SigA2 (320 aa).

A sigma-70 factor domain-2 region spans residues 89-159 (MIEANLRLVV…TRAIAQQSRT (71 aa)). The Interaction with polymerase core subunit RpoC motif lies at 113-116 (DLIQ). A sigma-70 factor domain-3 region spans residues 168–243 (EKLNKLKKTQ…EDEQSSPSDY (76 aa)). Residues 256-310 (LMAELTPQQQAVIALRYGLDEGDSLSLAKVGERLNISRERVRKLERQAMDHLRRR) are sigma-70 factor domain-4. Positions 282 to 301 (LAKVGERLNISRERVRKLER) form a DNA-binding region, H-T-H motif.

The protein belongs to the sigma-70 factor family.

The protein resides in the cytoplasm. Sigma factors are initiation factors that promote the attachment of RNA polymerase to specific initiation sites and are then released. This sigma factor is a component of the biological clock pathway that affects the circadian expression of a subset of genes in this bacterium. This Synechococcus elongatus (strain ATCC 33912 / PCC 7942 / FACHB-805) (Anacystis nidulans R2) protein is RNA polymerase sigma factor SigA2 (sigA2).